A 291-amino-acid chain; its full sequence is Hydroxysteroid 11-beta-dehydrogenase 1-like protein B (291 aa).

The signal sequence occupies residues methionine 1 to alanine 17. NADP(+)-binding positions include glycine 40–arginine 66, aspartate 91–methionine 92, and asparagine 118–isoleucine 120. Substrate is bound at residue serine 170. Catalysis depends on tyrosine 183, which acts as the Proton acceptor. NADP(+) is bound by residues tyrosine 183–lysine 187 and glycine 216–asparagine 222.

Belongs to the short-chain dehydrogenases/reductases (SDR) family.

Its subcellular location is the secreted. It catalyses the reaction cortisone + NADPH + H(+) = cortisol + NADP(+). Its function is as follows. Unidirectional NADP(+)-dependent cortisol dehydrogenase (in vitro). In Xenopus laevis (African clawed frog), this protein is Hydroxysteroid 11-beta-dehydrogenase 1-like protein B (hsd11b1l-b).